Here is a 407-residue protein sequence, read N- to C-terminus: 1-deoxy-D-xylulose 5-phosphate reductoisomerase (407 aa).

NADPH is bound by residues Thr-25, Gly-26, Ser-27, Ile-28, Asn-53, and Asn-136. Lys-137 contributes to the 1-deoxy-D-xylulose 5-phosphate binding site. Glu-138 contacts NADPH. Residue Asp-162 coordinates Mn(2+). Residues Ser-163, Glu-164, Ser-188, and His-211 each coordinate 1-deoxy-D-xylulose 5-phosphate. Residue Glu-164 participates in Mn(2+) binding. Position 217 (Gly-217) interacts with NADPH. 1-deoxy-D-xylulose 5-phosphate contacts are provided by Ser-224, Asn-229, Lys-230, and Glu-233. Glu-233 contributes to the Mn(2+) binding site.

It belongs to the DXR family. Mg(2+) is required as a cofactor. It depends on Mn(2+) as a cofactor.

It catalyses the reaction 2-C-methyl-D-erythritol 4-phosphate + NADP(+) = 1-deoxy-D-xylulose 5-phosphate + NADPH + H(+). It participates in isoprenoid biosynthesis; isopentenyl diphosphate biosynthesis via DXP pathway; isopentenyl diphosphate from 1-deoxy-D-xylulose 5-phosphate: step 1/6. Its function is as follows. Catalyzes the NADPH-dependent rearrangement and reduction of 1-deoxy-D-xylulose-5-phosphate (DXP) to 2-C-methyl-D-erythritol 4-phosphate (MEP). The protein is 1-deoxy-D-xylulose 5-phosphate reductoisomerase of Rhodopseudomonas palustris (strain BisB18).